We begin with the raw amino-acid sequence, 615 residues long: Gluconate 2-dehydrogenase flavoprotein (615 aa).

The signal sequence occupies residues 1-22 (MERGERVSVPVSGYSRGEGVTV). The Proton acceptor role is filled by H542.

Belongs to the GMC oxidoreductase family. Heterotrimer. It depends on FAD as a cofactor.

It localises to the cell membrane. The catalysed reaction is D-gluconate + A = 2-dehydro-D-gluconate + AH2. Functionally, part of the heterotrimer that catalyzes the conversion of D-gluconate to 2-dehydro-D-gluconate. This subunit functions as the dehydrogenase. In Pantoea cypripedii (Pectobacterium cypripedii), this protein is Gluconate 2-dehydrogenase flavoprotein.